A 106-amino-acid polypeptide reads, in one-letter code: Starvation responsive small protein A (106 aa).

The helical transmembrane segment at 15 to 32 (ILLVNAGLISAYGVRIIF) threads the bilayer.

Its subcellular location is the cell membrane. In terms of biological role, involved in starvation response and aggregation stage of the life cycle. May be involved in fruiting body morphogenesis and spore formation. This is Starvation responsive small protein A from Dictyostelium discoideum (Social amoeba).